A 311-amino-acid chain; its full sequence is Cadmium, cobalt and zinc/H(+)-K(+) antiporter (311 aa).

Residues methionine 1–lysine 12 are Extracellular-facing. A helical transmembrane segment spans residues valine 13–phenylalanine 33. The Cytoplasmic portion of the chain corresponds to leucine 34 to aspartate 43. Residues alanine 44–alanine 64 traverse the membrane as a helical segment. Over glutamate 65–arginine 78 the chain is Extracellular. Residues phenylalanine 79–isoleucine 99 form a helical membrane-spanning segment. Topologically, residues tyrosine 100 to threonine 115 are cytoplasmic. The helical transmembrane segment at glycine 116–methionine 136 threads the bilayer. Residues serine 137–aspartate 157 are Extracellular-facing. Residues methionine 158–tryptophan 178 form a helical membrane-spanning segment. Topologically, residues alanine 179–histidine 311 are cytoplasmic.

It belongs to the cation diffusion facilitator (CDF) transporter (TC 2.A.4) family. SLC30A subfamily.

It is found in the cell membrane. Functionally, involved in divalent cation and potassium homeostasis in the cell. Catalyzes the active efflux of zinc, cadmium and cobalt, in exchange for potassium and H(+) ions. The polypeptide is Cadmium, cobalt and zinc/H(+)-K(+) antiporter (czcD) (Bacillus subtilis (strain 168)).